The sequence spans 655 residues: p-hydroxybenzoic acid efflux pump subunit AaeB (655 aa).

A run of 10 helical transmembrane segments spans residues 13-33 (FAVK…HFQL), 38-58 (WAVL…GGEP), 69-89 (LRII…IAMI), 93-113 (LLMI…SSLV), 121-141 (WGLA…EPLL), 152-172 (EIVV…PRSI), 370-390 (LFWL…IAVV), 407-427 (FIYG…VIIP), 431-451 (QSML…GIEV), and 481-501 (LFLD…TVIL).

This sequence belongs to the aromatic acid exporter ArAE (TC 2.A.85) family.

The protein localises to the cell inner membrane. Functionally, forms an efflux pump with AaeA. Could function as a metabolic relief valve, allowing to eliminate certain compounds when they accumulate to high levels in the cell. This is p-hydroxybenzoic acid efflux pump subunit AaeB from Escherichia fergusonii (strain ATCC 35469 / DSM 13698 / CCUG 18766 / IAM 14443 / JCM 21226 / LMG 7866 / NBRC 102419 / NCTC 12128 / CDC 0568-73).